The following is a 385-amino-acid chain: MAFRKSNVYLSLVNSYIIDSPQPSSINYWWNMGSLLGLCLVIQIVTGIFMAMHYSSNIELAFSSVEHIMRDVHNGYILRYLHANGASFFFMVMFMHMAKGLYYGSYRSPRVTLWNVGVIIFILTIATAFLGYCCVYGQMSHWGATVITNLFSAIPFVGNDIVSWLWGGFSVSNPTIQRFFALHYLVPFIIAAMVIMHLMALHIHGSSNPLGITGNLDRIPMHSYFIFKDLVTVFLFMLILALFVFYSPNTLGHPDNYIPGNPLVTPASIVPEWYLLPFYAILRSIPDKLLGVITMFAAILVLLVLPFTDRSVVRGNTFKVLSKFFFFIFVFNFVLLGQIGACHVEVPYVLMGQIATFIYFAYFLIIVPVISTIENVLFYIGRVNK.

Over 1–27 (MAFRKSNVYLSLVNSYIIDSPQPSSIN) the chain is Mitochondrial matrix. Tyrosine 16 serves as a coordination point for a ubiquinone. The helical transmembrane segment at 28-51 (YWWNMGSLLGLCLVIQIVTGIFMA) threads the bilayer. Residues 52 to 74 (MHYSSNIELAFSSVEHIMRDVHN) lie on the Mitochondrial intermembrane side of the membrane. A helical transmembrane segment spans residues 75–102 (GYILRYLHANGASFFFMVMFMHMAKGLY). The heme b site is built by histidine 82 and histidine 96. Residues 103-110 (YGSYRSPR) are Mitochondrial matrix-facing. A helical membrane pass occupies residues 111–135 (VTLWNVGVIIFILTIATAFLGYCCV). Residues 136-172 (YGQMSHWGATVITNLFSAIPFVGNDIVSWLWGGFSVS) lie on the Mitochondrial intermembrane side of the membrane. Residues 173 to 204 (NPTIQRFFALHYLVPFIIAAMVIMHLMALHIH) form a helical membrane-spanning segment. Histidine 183 and histidine 197 together coordinate heme b. A ubiquinone is bound at residue histidine 202. The Mitochondrial matrix segment spans residues 205–223 (GSSNPLGITGNLDRIPMHS). The helical transmembrane segment at 224–246 (YFIFKDLVTVFLFMLILALFVFY) threads the bilayer. Residues 247–287 (SPNTLGHPDNYIPGNPLVTPASIVPEWYLLPFYAILRSIPD) lie on the Mitochondrial intermembrane side of the membrane. A helical membrane pass occupies residues 288 to 308 (KLLGVITMFAAILVLLVLPFT). Over 309 to 319 (DRSVVRGNTFK) the chain is Mitochondrial matrix. Residues 320–340 (VLSKFFFFIFVFNFVLLGQIG) form a helical membrane-spanning segment. Over 341–347 (ACHVEVP) the chain is Mitochondrial intermembrane. The chain crosses the membrane as a helical span at residues 348–364 (YVLMGQIATFIYFAYFL). At 365-385 (IIVPVISTIENVLFYIGRVNK) the chain is on the mitochondrial matrix side.

Belongs to the cytochrome b family. Component of the ubiquinol-cytochrome c oxidoreductase (cytochrome b-c1 complex, complex III, CIII), a multisubunit enzyme composed of 10 subunits. The complex is composed of 3 respiratory subunits cytochrome b (COB), cytochrome c1 (CYT1) and Rieske protein (RIP1), 2 core protein subunits COR1 and QCR2, and 5 low-molecular weight protein subunits QCR6, QCR7, QCR8, QCR9 and QCR10. The complex exists as an obligatory dimer and forms supercomplexes (SCs) in the inner mitochondrial membrane with a monomer or a dimer of cytochrome c oxidase (complex IV, CIV), resulting in 2 different assemblies (supercomplexes III(2)IV and III(2)IV(2)). It depends on heme b as a cofactor.

It localises to the mitochondrion inner membrane. The enzyme catalyses a quinol + 2 Fe(III)-[cytochrome c](out) = a quinone + 2 Fe(II)-[cytochrome c](out) + 2 H(+)(out). Functionally, component of the ubiquinol-cytochrome c oxidoreductase, a multisubunit transmembrane complex that is part of the mitochondrial electron transport chain which drives oxidative phosphorylation. The respiratory chain contains 3 multisubunit complexes succinate dehydrogenase (complex II, CII), ubiquinol-cytochrome c oxidoreductase (cytochrome b-c1 complex, complex III, CIII) and cytochrome c oxidase (complex IV, CIV), that cooperate to transfer electrons derived from NADH and succinate to molecular oxygen, creating an electrochemical gradient over the inner membrane that drives transmembrane transport and the ATP synthase. The cytochrome b-c1 complex catalyzes electron transfer from ubiquinol to cytochrome c, linking this redox reaction to translocation of protons across the mitochondrial inner membrane, with protons being carried across the membrane as hydrogens on the quinol. In the process called Q cycle, 2 protons are consumed from the matrix, 4 protons are released into the intermembrane space and 2 electrons are passed to cytochrome c. Cytochrome b is a catalytic core subunit containing 2 b-type hemes BL and BH topographically segregated in the quinone reduction (Qi) and quinol oxidation (Q0) sites on opposite sides of the membrane. The polypeptide is Cytochrome b (COB) (Saccharomyces cerevisiae (strain ATCC 204508 / S288c) (Baker's yeast)).